The chain runs to 173 residues: Putative metal-dependent hydrolase BT9727_2476 (173 aa).

Zn(2+) is bound by residues histidine 65, histidine 156, and histidine 160.

It belongs to the metal hydrolase YfiT family. As to quaternary structure, homodimer. Requires Zn(2+) as cofactor.

Its subcellular location is the cytoplasm. Possible metal-dependent hydrolase. This Bacillus thuringiensis subsp. konkukian (strain 97-27) protein is Putative metal-dependent hydrolase BT9727_2476.